Here is a 629-residue protein sequence, read N- to C-terminus: Kelch-like protein 8 (629 aa).

Residues 1–10 (MASESTNGKQ) are compositionally biased toward polar residues. Residues 1-40 (MASESTNGKQARSHVTKGRRQYQHQHQQQQQQQQQVRSRS) form a disordered region. N-acetylalanine is present on Ala2. The segment covering 11-23 (ARSHVTKGRRQYQ) has biased composition (basic residues). Low complexity predominate over residues 24 to 35 (HQHQQQQQQQQQ). The region spanning 76 to 143 (CDVTLKVGSK…VYSSRLTLTV (68 aa)) is the BTB domain. One can recognise a BACK domain in the interval 178-279 (CLAVRAFAES…LPVDFLMGVV (102 aa)). 6 Kelch repeats span residues 328 to 375 (VLFC…SVEG), 376 to 422 (KVYA…SLGG), 424 to 469 (IYAI…ALIN), 471 to 516 (VYAV…ELHG), 517 to 563 (CLYV…TVMG), and 565 to 610 (IFAV…VCDC).

Component of the BCR(KLHL8) E3 ubiquitin ligase complex, at least composed of CUL3, KLHL8 and RBX1. Interacts with RAPSN.

The protein operates within protein modification; protein ubiquitination. In terms of biological role, substrate-specific adapter of a BCR (BTB-CUL3-RBX1) E3 ubiquitin ligase complex required for The BCR(KLHL8) ubiquitin ligase complex mediates ubiquitination and degradation of RAPSN. This is Kelch-like protein 8 (Klhl8) from Mus musculus (Mouse).